Here is a 166-residue protein sequence, read N- to C-terminus: Small ribosomal subunit protein uS5 (166 aa).

Residues 11–74 enclose the S5 DRBM domain; that stretch reads LQEKLIAVNR…EQAKRNLSKV (64 aa).

Belongs to the universal ribosomal protein uS5 family. In terms of assembly, part of the 30S ribosomal subunit. Contacts proteins S4 and S8.

With S4 and S12 plays an important role in translational accuracy. Functionally, located at the back of the 30S subunit body where it stabilizes the conformation of the head with respect to the body. In Aeromonas salmonicida (strain A449), this protein is Small ribosomal subunit protein uS5.